The following is a 476-amino-acid chain: 1-aminocyclopropane-1-carboxylate synthase 4 (476 aa).

Lys-282 carries the post-translational modification N6-(pyridoxal phosphate)lysine.

Belongs to the class-I pyridoxal-phosphate-dependent aminotransferase family. Homodimer. It depends on pyridoxal 5'-phosphate as a cofactor.

It carries out the reaction S-adenosyl-L-methionine = 1-aminocyclopropane-1-carboxylate + S-methyl-5'-thioadenosine + H(+). Its pathway is alkene biosynthesis; ethylene biosynthesis via S-adenosyl-L-methionine; ethylene from S-adenosyl-L-methionine: step 1/2. In terms of biological role, catalyzes the formation of 1-aminocyclopropane-1-carboxylate, a direct precursor of ethylene in higher plants. The sequence is that of 1-aminocyclopropane-1-carboxylate synthase 4 (ACS4) from Solanum lycopersicum (Tomato).